The following is a 198-amino-acid chain: Recombination protein RecR (198 aa).

The segment at 57–72 (CQRCNTFSEAELCAIC) adopts a C4-type zinc-finger fold. The 96-residue stretch at 80–175 (DQLCIVEMPA…TVTRIARGMP (96 aa)) folds into the Toprim domain.

Belongs to the RecR family.

Its function is as follows. May play a role in DNA repair. It seems to be involved in an RecBC-independent recombinational process of DNA repair. It may act with RecF and RecO. This chain is Recombination protein RecR, found in Chromobacterium violaceum (strain ATCC 12472 / DSM 30191 / JCM 1249 / CCUG 213 / NBRC 12614 / NCIMB 9131 / NCTC 9757 / MK).